We begin with the raw amino-acid sequence, 204 residues long: Protein PAXX (204 aa).

Residues F37 to A79 form the PISA domain. S134 bears the Phosphoserine mark. Residues E143–T204 are disordered. T145 is modified (phosphothreonine). Phosphoserine is present on residues S148 and S152. The segment at G171–T204 is mediates interaction with XRCC5/Ku80 and XRCC6/Ku70 and association with the non-homologous end joining core complex. The short motif at F190–T204 is the XLM element.

It belongs to the XRCC4-XLF family. PAXX subfamily. In terms of assembly, homodimer. Interacts with the DNA-bound XRCC5/Ku80 and XRCC6/Ku70 heterodimer (Ku complex); the interaction is direct. Associated component of the non-homologous end joining (NHEJ) complex, composed of the core proteins PRKDC, LIG4, XRCC4, XRCC6/Ku70, XRCC5/Ku86 and NHEJ1/XLF. Interacts with POLL (DNA polymerase lambda); promoting POLL recruitment to double-strand breaks (DSBs) and stimulation of the end-filling activity of POLL. Post-translationally, phosphorylation may inhibit interaction with the DNA-bound XRCC5/Ku80 and XRCC6/Ku70 heterodimer (Ku complex).

The protein localises to the nucleus. It is found in the chromosome. Its subcellular location is the cytoplasm. Non-essential DNA repair protein involved in DNA non-homologous end joining (NHEJ); participates in double-strand break (DSB) repair and V(D)J recombination. May act as a scaffold required for accumulation of the Ku heterodimer, composed of XRCC5/Ku80 and XRCC6/Ku70, at double-strand break sites and promote the assembly and/or stability of the NHEJ machinery. Involved in NHEJ by promoting the ligation of blunt-ended DNA ends. Together with NHEJ1/XLF, collaborates with DNA polymerase lambda (POLL) to promote joining of non-cohesive DNA ends. Constitutes a non-essential component of classical NHEJ: has a complementary but distinct function with NHEJ1/XLF in DNA repair. Able to restrict infection by herpesvirus 1 (HSV-1) via an unknown mechanism. The sequence is that of Protein PAXX from Homo sapiens (Human).